Consider the following 130-residue polypeptide: Small ribosomal subunit protein uS11c (130 aa).

Belongs to the universal ribosomal protein uS11 family. As to quaternary structure, part of the 30S ribosomal subunit.

It is found in the plastid. It localises to the chloroplast. The polypeptide is Small ribosomal subunit protein uS11c (Trieres chinensis (Marine centric diatom)).